A 156-amino-acid polypeptide reads, in one-letter code: Small ribosomal subunit protein uS7 (156 aa).

Belongs to the universal ribosomal protein uS7 family. Part of the 30S ribosomal subunit. Contacts proteins S9 and S11.

One of the primary rRNA binding proteins, it binds directly to 16S rRNA where it nucleates assembly of the head domain of the 30S subunit. Is located at the subunit interface close to the decoding center, probably blocks exit of the E-site tRNA. This is Small ribosomal subunit protein uS7 from Geotalea uraniireducens (strain Rf4) (Geobacter uraniireducens).